Reading from the N-terminus, the 102-residue chain is Protein transport protein sec61 subunit beta (102 aa).

Residues 1 to 15 (MSSTKASGSVKNSAA) show a composition bias toward polar residues. The tract at residues 1–53 (MSSTKASGSVKNSAASAPGGPKSQIRRRAAVEKNTKESNSGPAGARAAGAPGS) is disordered. The Cytoplasmic segment spans residues 1–72 (MSSTKASGSV…DEASGFKVDP (72 aa)). Over residues 41 to 52 (GPAGARAAGAPG) the composition is skewed to low complexity. A helical transmembrane segment spans residues 73–93 (VVVMVLSVGFIASVFLLHIVA).

Belongs to the SEC61-beta family. In terms of assembly, heterotrimeric complex composed of SEC61, SBH1 and SSS1.

The protein resides in the endoplasmic reticulum membrane. Functionally, necessary for protein translocation in the endoplasmic reticulum. In Schizosaccharomyces pombe (strain 972 / ATCC 24843) (Fission yeast), this protein is Protein transport protein sec61 subunit beta (sbh1).